The primary structure comprises 332 residues: Biotin synthase (332 aa).

One can recognise a Radical SAM core domain in the interval 53-282 (HFGKKVKLNM…TKEIRISGGR (230 aa)). Residues C71, C75, and C78 each coordinate [4Fe-4S] cluster. [2Fe-2S] cluster contacts are provided by C115, C147, C207, and R277.

This sequence belongs to the radical SAM superfamily. Biotin synthase family. In terms of assembly, homodimer. It depends on [4Fe-4S] cluster as a cofactor. Requires [2Fe-2S] cluster as cofactor.

It carries out the reaction (4R,5S)-dethiobiotin + (sulfur carrier)-SH + 2 reduced [2Fe-2S]-[ferredoxin] + 2 S-adenosyl-L-methionine = (sulfur carrier)-H + biotin + 2 5'-deoxyadenosine + 2 L-methionine + 2 oxidized [2Fe-2S]-[ferredoxin]. The protein operates within cofactor biosynthesis; biotin biosynthesis; biotin from 7,8-diaminononanoate: step 2/2. In terms of biological role, catalyzes the conversion of dethiobiotin (DTB) to biotin by the insertion of a sulfur atom into dethiobiotin via a radical-based mechanism. The sequence is that of Biotin synthase from Bacillus cereus (strain AH187).